The sequence spans 370 residues: MQQDKVNLLGLNQKAIEDFFISIGKKKFHARQVFKWIHKKGVIDFDAMTDLGKNLRHKLKDKAQITIPKVVFSKASKDGTHKWLIDVGGSAVETVFIPEEGRGTLCVSSQIGCTLNCSFCSTGKQGFNRNLSAAEVIAQLWIAARTLSKTDGEHDFTVTNIVMMGMGEPLMNFENVVPAMDIMMDDLAYGLSRRKVTLSTSGVVPRIYDLLEQSGVSLAVSLHTPNDMLRNEIVPINKKYNIDELLEACKLYAQKGPHKHITFEYTLMEEVNDNLSDAEELVALLKSREVPAKINLIPFNPYPGTPYKKPSNNRIHRFKEFLQHNGFVTTVRKTRGDDIDAACGQLAGDVMDKTNRKQIYLKKLGDTNAN.

Glu-93 acts as the Proton acceptor in catalysis. In terms of domain architecture, Radical SAM core spans 99 to 337 (EEGRGTLCVS…VTTVRKTRGD (239 aa)). Cys-106 and Cys-343 are disulfide-bonded. 3 residues coordinate [4Fe-4S] cluster: Cys-113, Cys-117, and Cys-120. Residues 167–168 (GE), Ser-199, 221–223 (SLH), and Asn-300 contribute to the S-adenosyl-L-methionine site. Cys-343 serves as the catalytic S-methylcysteine intermediate.

The protein belongs to the radical SAM superfamily. RlmN family. The cofactor is [4Fe-4S] cluster.

The protein localises to the cytoplasm. It catalyses the reaction adenosine(2503) in 23S rRNA + 2 reduced [2Fe-2S]-[ferredoxin] + 2 S-adenosyl-L-methionine = 2-methyladenosine(2503) in 23S rRNA + 5'-deoxyadenosine + L-methionine + 2 oxidized [2Fe-2S]-[ferredoxin] + S-adenosyl-L-homocysteine. The catalysed reaction is adenosine(37) in tRNA + 2 reduced [2Fe-2S]-[ferredoxin] + 2 S-adenosyl-L-methionine = 2-methyladenosine(37) in tRNA + 5'-deoxyadenosine + L-methionine + 2 oxidized [2Fe-2S]-[ferredoxin] + S-adenosyl-L-homocysteine. Specifically methylates position 2 of adenine 2503 in 23S rRNA and position 2 of adenine 37 in tRNAs. m2A2503 modification seems to play a crucial role in the proofreading step occurring at the peptidyl transferase center and thus would serve to optimize ribosomal fidelity. This is Dual-specificity RNA methyltransferase RlmN from Francisella tularensis subsp. holarctica (strain FTNF002-00 / FTA).